Consider the following 1121-residue polypeptide: CRISPR-associated endonuclease Cas9 1 (1121 aa).

Catalysis depends on aspartate 9, which acts as the For RuvC-like nuclease domain. The Mg(2+) site is built by aspartate 9, glutamate 509, and glutamate 513. Positions 516 to 684 (EDDEKKAIQK…VRKKFIERNL (169 aa)) constitute an HNH Cas9-type domain. The Proton acceptor for HNH nuclease domain role is filled by histidine 599. Histidine 738 contacts Mg(2+).

This sequence belongs to the CRISPR-associated protein Cas9 family. Subtype II-A subfamily. As to quaternary structure, monomer. Binds crRNA and tracrRNA. Mg(2+) is required as a cofactor.

Its function is as follows. CRISPR (clustered regularly interspaced short palindromic repeat) is an adaptive immune system that provides protection against mobile genetic elements (viruses, transposable elements and conjugative plasmids). CRISPR clusters contain spacers, sequences complementary to antecedent mobile elements, and target invading nucleic acids. CRISPR clusters are transcribed and processed into CRISPR RNA (crRNA). In type II CRISPR systems correct processing of pre-crRNA requires a trans-encoded small RNA (tracrRNA), endogenous ribonuclease 3 (rnc) and this protein. The tracrRNA serves as a guide for ribonuclease 3-aided processing of pre-crRNA. Subsequently Cas9/crRNA/tracrRNA endonucleolytically cleaves linear or circular dsDNA target complementary to the spacer; Cas9 is inactive in the absence of the 2 guide RNAs (gRNA). Cas9 recognizes the protospacer adjacent motif (PAM) in the CRISPR repeat sequences to help distinguish self versus nonself, as targets within the bacterial CRISPR locus do not have PAMs. PAM recognition is also required for catalytic activity. Cuts target DNA when Cas9 and gRNAs are mixed. The sequence is that of CRISPR-associated endonuclease Cas9 1 from Streptococcus thermophilus (strain ATCC BAA-491 / LMD-9).